A 279-amino-acid chain; its full sequence is Tryptophan 2,3-dioxygenase (279 aa).

Residues 48 to 52 (FIVIH), Tyr110, and Arg114 each bind substrate. His237 contacts heme. A substrate-binding site is contributed by Thr251.

Belongs to the tryptophan 2,3-dioxygenase family. Homotetramer. Heme is required as a cofactor.

It carries out the reaction L-tryptophan + O2 = N-formyl-L-kynurenine. It participates in amino-acid degradation; L-tryptophan degradation via kynurenine pathway; L-kynurenine from L-tryptophan: step 1/2. Its function is as follows. Heme-dependent dioxygenase that catalyzes the oxidative cleavage of the L-tryptophan (L-Trp) pyrrole ring and converts L-tryptophan to N-formyl-L-kynurenine. Catalyzes the oxidative cleavage of the indole moiety. The polypeptide is Tryptophan 2,3-dioxygenase (Exiguobacterium sibiricum (strain DSM 17290 / CCUG 55495 / CIP 109462 / JCM 13490 / 255-15)).